A 145-amino-acid polypeptide reads, in one-letter code: RING-H2 finger protein ATL18 (145 aa).

The N-terminal stretch at Met-1–Leu-29 is a signal peptide. An RING-type; atypical zinc finger spans residues Cys-62–Arg-105. The chain crosses the membrane as a helical span at residues Ser-125 to Leu-145.

Belongs to the RING-type zinc finger family. ATL subfamily.

It localises to the membrane. The enzyme catalyses S-ubiquitinyl-[E2 ubiquitin-conjugating enzyme]-L-cysteine + [acceptor protein]-L-lysine = [E2 ubiquitin-conjugating enzyme]-L-cysteine + N(6)-ubiquitinyl-[acceptor protein]-L-lysine.. Its pathway is protein modification; protein ubiquitination. The polypeptide is RING-H2 finger protein ATL18 (ATL18) (Arabidopsis thaliana (Mouse-ear cress)).